Here is a 125-residue protein sequence, read N- to C-terminus: Large ribosomal subunit protein bL19 (125 aa).

Belongs to the bacterial ribosomal protein bL19 family.

Functionally, this protein is located at the 30S-50S ribosomal subunit interface and may play a role in the structure and function of the aminoacyl-tRNA binding site. The polypeptide is Large ribosomal subunit protein bL19 (Wolbachia pipientis subsp. Culex pipiens (strain wPip)).